Here is a 378-residue protein sequence, read N- to C-terminus: Queuine tRNA-ribosyltransferase (378 aa).

Aspartate 89 acts as the Proton acceptor in catalysis. Residues 89–93 (DSGGF), aspartate 143, glutamine 187, and glycine 214 contribute to the substrate site. The segment at 245 to 251 (GVGKPQD) is RNA binding. The active-site Nucleophile is the aspartate 264. Residues 269–273 (TRNAR) form an RNA binding; important for wobble base 34 recognition region. Cysteine 302, cysteine 304, cysteine 307, and histidine 334 together coordinate Zn(2+).

The protein belongs to the queuine tRNA-ribosyltransferase family. Homodimer. Within each dimer, one monomer is responsible for RNA recognition and catalysis, while the other monomer binds to the replacement base PreQ1. The cofactor is Zn(2+).

The catalysed reaction is 7-aminomethyl-7-carbaguanine + guanosine(34) in tRNA = 7-aminomethyl-7-carbaguanosine(34) in tRNA + guanine. It participates in tRNA modification; tRNA-queuosine biosynthesis. In terms of biological role, catalyzes the base-exchange of a guanine (G) residue with the queuine precursor 7-aminomethyl-7-deazaguanine (PreQ1) at position 34 (anticodon wobble position) in tRNAs with GU(N) anticodons (tRNA-Asp, -Asn, -His and -Tyr). Catalysis occurs through a double-displacement mechanism. The nucleophile active site attacks the C1' of nucleotide 34 to detach the guanine base from the RNA, forming a covalent enzyme-RNA intermediate. The proton acceptor active site deprotonates the incoming PreQ1, allowing a nucleophilic attack on the C1' of the ribose to form the product. After dissociation, two additional enzymatic reactions on the tRNA convert PreQ1 to queuine (Q), resulting in the hypermodified nucleoside queuosine (7-(((4,5-cis-dihydroxy-2-cyclopenten-1-yl)amino)methyl)-7-deazaguanosine). This chain is Queuine tRNA-ribosyltransferase, found in Blochmanniella floridana.